Consider the following 103-residue polypeptide: Large ribosomal subunit protein uL24 (103 aa).

This sequence belongs to the universal ribosomal protein uL24 family. In terms of assembly, part of the 50S ribosomal subunit.

One of two assembly initiator proteins, it binds directly to the 5'-end of the 23S rRNA, where it nucleates assembly of the 50S subunit. In terms of biological role, one of the proteins that surrounds the polypeptide exit tunnel on the outside of the subunit. In Mannheimia succiniciproducens (strain KCTC 0769BP / MBEL55E), this protein is Large ribosomal subunit protein uL24.